Here is a 559-residue protein sequence, read N- to C-terminus: Urocanate hydratase (559 aa).

NAD(+) is bound by residues 53–54, Q131, 177–179, E197, R202, 243–244, 264–268, 274–275, and Y323; these read GG, GMG, NA, QTSAH, and YL. The active site involves C411. G493 lines the NAD(+) pocket.

This sequence belongs to the urocanase family. Requires NAD(+) as cofactor.

The protein localises to the cytoplasm. It carries out the reaction 4-imidazolone-5-propanoate = trans-urocanate + H2O. The protein operates within amino-acid degradation; L-histidine degradation into L-glutamate; N-formimidoyl-L-glutamate from L-histidine: step 2/3. In terms of biological role, catalyzes the conversion of urocanate to 4-imidazolone-5-propionate. The polypeptide is Urocanate hydratase (Pseudomonas paraeruginosa (strain DSM 24068 / PA7) (Pseudomonas aeruginosa (strain PA7))).